The chain runs to 504 residues: Maturase K (504 aa).

This sequence belongs to the intron maturase 2 family. MatK subfamily.

It is found in the plastid. It localises to the chloroplast. Functionally, usually encoded in the trnK tRNA gene intron. Probably assists in splicing its own and other chloroplast group II introns. In Quercus suber (Cork oak), this protein is Maturase K.